The following is a 211-amino-acid chain: Histidine biosynthesis bifunctional protein HisIE (211 aa).

Residues 1-122 form a phosphoribosyl-AMP cyclohydrolase region; the sequence is MSFKTAEVSS…DPQEESQMVW (122 aa). A phosphoribosyl-ATP pyrophosphohydrolase region spans residues 123–211; the sequence is LHQLEQLLAA…VINKLKERHK (89 aa).

In the N-terminal section; belongs to the PRA-CH family. It in the C-terminal section; belongs to the PRA-PH family.

It is found in the cytoplasm. It carries out the reaction 1-(5-phospho-beta-D-ribosyl)-ATP + H2O = 1-(5-phospho-beta-D-ribosyl)-5'-AMP + diphosphate + H(+). The enzyme catalyses 1-(5-phospho-beta-D-ribosyl)-5'-AMP + H2O = 1-(5-phospho-beta-D-ribosyl)-5-[(5-phospho-beta-D-ribosylamino)methylideneamino]imidazole-4-carboxamide. It participates in amino-acid biosynthesis; L-histidine biosynthesis; L-histidine from 5-phospho-alpha-D-ribose 1-diphosphate: step 2/9. The protein operates within amino-acid biosynthesis; L-histidine biosynthesis; L-histidine from 5-phospho-alpha-D-ribose 1-diphosphate: step 3/9. This Vibrio vulnificus (strain CMCP6) protein is Histidine biosynthesis bifunctional protein HisIE.